The chain runs to 153 residues: Nucleoside diphosphate kinase (153 aa).

Residues Lys13, Phe61, Arg89, Thr95, Arg106, and Asn116 each contribute to the ATP site. His119 (pros-phosphohistidine intermediate) is an active-site residue.

Belongs to the NDK family. Mg(2+) serves as cofactor.

The protein resides in the cytoplasm. Its subcellular location is the cell membrane. It catalyses the reaction a 2'-deoxyribonucleoside 5'-diphosphate + ATP = a 2'-deoxyribonucleoside 5'-triphosphate + ADP. It carries out the reaction a ribonucleoside 5'-diphosphate + ATP = a ribonucleoside 5'-triphosphate + ADP. Its function is as follows. Major role in the synthesis of nucleoside triphosphates other than ATP. The ATP gamma phosphate is transferred to the NDP beta phosphate via a ping-pong mechanism, using a phosphorylated active-site intermediate. The sequence is that of Nucleoside diphosphate kinase from Gallus gallus (Chicken).